Consider the following 189-residue polypeptide: Glycerol-3-phosphate acyltransferase (189 aa).

5 consecutive transmembrane segments (helical) span residues 1-21, 50-70, 72-92, 111-131, and 151-171; these read MVWL…AVLL, KLAI…VLVA, WLGL…IGHL, MLLG…LLTF, and LLAW…ALIV.

It belongs to the PlsY family. As to quaternary structure, probably interacts with PlsX.

It is found in the cell inner membrane. The catalysed reaction is an acyl phosphate + sn-glycerol 3-phosphate = a 1-acyl-sn-glycero-3-phosphate + phosphate. It participates in lipid metabolism; phospholipid metabolism. Functionally, catalyzes the transfer of an acyl group from acyl-phosphate (acyl-PO(4)) to glycerol-3-phosphate (G3P) to form lysophosphatidic acid (LPA). This enzyme utilizes acyl-phosphate as fatty acyl donor, but not acyl-CoA or acyl-ACP. The chain is Glycerol-3-phosphate acyltransferase from Pseudomonas paraeruginosa (strain DSM 24068 / PA7) (Pseudomonas aeruginosa (strain PA7)).